The chain runs to 253 residues: HTH-type transcriptional regulator YdeO (253 aa).

Residues 137–233 (GKVRNIVNMK…GNSPKRVSKE (97 aa)) form the HTH araC/xylS-type domain. 2 consecutive DNA-binding regions (H-T-H motif) follow at residues 154-175 (KDICDCLYISESLLKKKLKQEQ) and 200-223 (VNKIAEQCGYASTSYFIYAFRKHF).

Functionally, induces the expression of gadE. Could also regulate the expression of other genes involved in acid resistance. In Shigella flexneri, this protein is HTH-type transcriptional regulator YdeO (ydeO).